The sequence spans 183 residues: Large ribosomal subunit protein uL5 (183 aa).

The protein belongs to the universal ribosomal protein uL5 family. As to quaternary structure, part of the 50S ribosomal subunit; part of the 5S rRNA/L5/L18/L25 subcomplex. Contacts the 5S rRNA and the P site tRNA. Forms a bridge to the 30S subunit in the 70S ribosome.

Its function is as follows. This is one of the proteins that bind and probably mediate the attachment of the 5S RNA into the large ribosomal subunit, where it forms part of the central protuberance. In the 70S ribosome it contacts protein S13 of the 30S subunit (bridge B1b), connecting the 2 subunits; this bridge is implicated in subunit movement. Contacts the P site tRNA; the 5S rRNA and some of its associated proteins might help stabilize positioning of ribosome-bound tRNAs. This chain is Large ribosomal subunit protein uL5, found in Pseudothermotoga lettingae (strain ATCC BAA-301 / DSM 14385 / NBRC 107922 / TMO) (Thermotoga lettingae).